The following is a 133-amino-acid chain: Small ribosomal subunit protein uS8 (133 aa).

This sequence belongs to the universal ribosomal protein uS8 family. In terms of assembly, part of the 30S ribosomal subunit. Contacts proteins S5 and S12.

In terms of biological role, one of the primary rRNA binding proteins, it binds directly to 16S rRNA central domain where it helps coordinate assembly of the platform of the 30S subunit. The protein is Small ribosomal subunit protein uS8 of Prochlorococcus marinus (strain MIT 9301).